The chain runs to 529 residues: Arginine--tRNA ligase (529 aa).

The short motif at 113 to 123 (ANPTGPLHIGH) is the 'HIGH' region element.

This sequence belongs to the class-I aminoacyl-tRNA synthetase family. Monomer.

Its subcellular location is the cytoplasm. The catalysed reaction is tRNA(Arg) + L-arginine + ATP = L-arginyl-tRNA(Arg) + AMP + diphosphate. In Aliarcobacter butzleri (strain RM4018) (Arcobacter butzleri), this protein is Arginine--tRNA ligase.